The sequence spans 134 residues: UPF0412 protein YaaI (134 aa).

The signal sequence occupies residues 1-23 (MKSVFTLSASLAISLLLCCTAQA).

This sequence belongs to the UPF0412 family.

This is UPF0412 protein YaaI from Escherichia coli O7:K1 (strain IAI39 / ExPEC).